The following is a 645-amino-acid chain: 1-deoxy-D-xylulose-5-phosphate synthase (645 aa).

Residues His79 and 120–122 (AHS) each bind thiamine diphosphate. Asp155 contributes to the Mg(2+) binding site. Residues 156–157 (GA), Asn184, Tyr293, and Glu375 each bind thiamine diphosphate. Asn184 contacts Mg(2+).

Belongs to the transketolase family. DXPS subfamily. As to quaternary structure, homodimer. It depends on Mg(2+) as a cofactor. Thiamine diphosphate is required as a cofactor.

It catalyses the reaction D-glyceraldehyde 3-phosphate + pyruvate + H(+) = 1-deoxy-D-xylulose 5-phosphate + CO2. Its pathway is metabolic intermediate biosynthesis; 1-deoxy-D-xylulose 5-phosphate biosynthesis; 1-deoxy-D-xylulose 5-phosphate from D-glyceraldehyde 3-phosphate and pyruvate: step 1/1. In terms of biological role, catalyzes the acyloin condensation reaction between C atoms 2 and 3 of pyruvate and glyceraldehyde 3-phosphate to yield 1-deoxy-D-xylulose-5-phosphate (DXP). The polypeptide is 1-deoxy-D-xylulose-5-phosphate synthase (Ruegeria sp. (strain TM1040) (Silicibacter sp.)).